Here is a 311-residue protein sequence, read N- to C-terminus: Aspartate carbamoyltransferase catalytic subunit (311 aa).

R55 and T56 together coordinate carbamoyl phosphate. Residue K85 coordinates L-aspartate. Carbamoyl phosphate is bound by residues R106, H135, and Q138. L-aspartate-binding residues include R168 and R230. Carbamoyl phosphate is bound by residues L268 and P269.

This sequence belongs to the aspartate/ornithine carbamoyltransferase superfamily. ATCase family. Heterododecamer (2C3:3R2) of six catalytic PyrB chains organized as two trimers (C3), and six regulatory PyrI chains organized as three dimers (R2).

It carries out the reaction carbamoyl phosphate + L-aspartate = N-carbamoyl-L-aspartate + phosphate + H(+). It participates in pyrimidine metabolism; UMP biosynthesis via de novo pathway; (S)-dihydroorotate from bicarbonate: step 2/3. In terms of biological role, catalyzes the condensation of carbamoyl phosphate and aspartate to form carbamoyl aspartate and inorganic phosphate, the committed step in the de novo pyrimidine nucleotide biosynthesis pathway. In Escherichia fergusonii (strain ATCC 35469 / DSM 13698 / CCUG 18766 / IAM 14443 / JCM 21226 / LMG 7866 / NBRC 102419 / NCTC 12128 / CDC 0568-73), this protein is Aspartate carbamoyltransferase catalytic subunit.